A 358-amino-acid polypeptide reads, in one-letter code: Heme A synthase (358 aa).

Transmembrane regions (helical) follow at residues 22–42 (IQVW…VGGA), 107–127 (VLGR…WVTK), 133–153 (IFLQ…IGWW), 172–192 (LAIH…LSRG), 208–228 (FAGW…LVAG), 269–289 (FVHR…ALYV), 302–322 (AIFL…TLLH), and 324–344 (VPIS…CFSV). His-271 lines the heme pocket. His-332 provides a ligand contact to heme.

Belongs to the COX15/CtaA family. Type 2 subfamily. In terms of assembly, interacts with CtaB. Heme b serves as cofactor.

It is found in the cell membrane. It carries out the reaction Fe(II)-heme o + 2 A + H2O = Fe(II)-heme a + 2 AH2. It participates in porphyrin-containing compound metabolism; heme A biosynthesis; heme A from heme O: step 1/1. Its function is as follows. Catalyzes the conversion of heme O to heme A by two successive hydroxylations of the methyl group at C8. The first hydroxylation forms heme I, the second hydroxylation results in an unstable dihydroxymethyl group, which spontaneously dehydrates, resulting in the formyl group of heme A. The polypeptide is Heme A synthase (Bartonella bacilliformis (strain ATCC 35685 / KC583 / Herrer 020/F12,63)).